The sequence spans 380 residues: Carbamoyl phosphate synthase small chain (380 aa).

Positions 1 to 184 are CPSase; sequence MTTSTRGAHR…EAYVVPAIGE (184 aa). L-glutamine-binding residues include Ser55, Gly236, and Gly238. The Glutamine amidotransferase type-1 domain occupies 188-380; the sequence is TVAAVDLGIK…FVNLMEGQRA (193 aa). Cys264 functions as the Nucleophile in the catalytic mechanism. Positions 265, 268, 306, 308, and 309 each coordinate L-glutamine. Residues His354 and Glu356 contribute to the active site.

The protein belongs to the CarA family. As to quaternary structure, composed of two chains; the small (or glutamine) chain promotes the hydrolysis of glutamine to ammonia, which is used by the large (or ammonia) chain to synthesize carbamoyl phosphate. Tetramer of heterodimers (alpha,beta)4.

The catalysed reaction is hydrogencarbonate + L-glutamine + 2 ATP + H2O = carbamoyl phosphate + L-glutamate + 2 ADP + phosphate + 2 H(+). The enzyme catalyses L-glutamine + H2O = L-glutamate + NH4(+). It participates in amino-acid biosynthesis; L-arginine biosynthesis; carbamoyl phosphate from bicarbonate: step 1/1. The protein operates within pyrimidine metabolism; UMP biosynthesis via de novo pathway; (S)-dihydroorotate from bicarbonate: step 1/3. Its function is as follows. Small subunit of the glutamine-dependent carbamoyl phosphate synthetase (CPSase). CPSase catalyzes the formation of carbamoyl phosphate from the ammonia moiety of glutamine, carbonate, and phosphate donated by ATP, constituting the first step of 2 biosynthetic pathways, one leading to arginine and/or urea and the other to pyrimidine nucleotides. The small subunit (glutamine amidotransferase) binds and cleaves glutamine to supply the large subunit with the substrate ammonia. The sequence is that of Carbamoyl phosphate synthase small chain from Streptomyces coelicolor (strain ATCC BAA-471 / A3(2) / M145).